A 496-amino-acid chain; its full sequence is GTPase Der (496 aa).

EngA-type G domains follow at residues 3–166 (PVVA…FDNL) and 208–381 (IKLA…RSAT). Residues 9 to 16 (GRPNVGKS), 56 to 60 (DTGGI), 118 to 121 (NKVD), 214 to 221 (GRPNVGKS), 261 to 265 (DTAGV), and 326 to 329 (NKWD) each bind GTP. A KH-like domain is found at 382–466 (TRVGTSVLTR…PIRIQFQNSD (85 aa)).

It belongs to the TRAFAC class TrmE-Era-EngA-EngB-Septin-like GTPase superfamily. EngA (Der) GTPase family. In terms of assembly, associates with the 50S ribosomal subunit.

GTPase that plays an essential role in the late steps of ribosome biogenesis. This chain is GTPase Der, found in Vibrio vulnificus (strain CMCP6).